We begin with the raw amino-acid sequence, 470 residues long: Pyoverdine export outer membrane protein OpmQ (470 aa).

The N-terminal stretch at 1–18 (MTLPRHLCLLPLSLSLLA) is a signal peptide. A lipid anchor (N-palmitoyl cysteine) is attached at Cys-19. Cys-19 is lipidated: S-diacylglycerol cysteine.

Belongs to the outer membrane factor (OMF) (TC 1.B.17) family. Part of the tripartite efflux system PvdRT-OpmQ, which is composed of an inner membrane component with both ATPase and permease domains, PvdT, a periplasmic membrane fusion protein, PvdR, and an outer membrane component, OpmQ.

It is found in the cell outer membrane. In terms of biological role, part of the tripartite efflux system PvdRT-OpmQ required for the secretion into the extracellular milieu of the siderophore pyoverdine (PVD), which is involved in iron acquisition. The system is responsible for export of newly synthesized PVD after the final steps of biosynthesis have taken place in the periplasm. It is also responsible for recycling of PVD after internalization of ferri-PVD into the periplasm by the outer-membrane receptor FpvA and release of iron from PVD, thus making PVD available for new cycles of iron uptake. Contributes to resistance against ampicillin. The chain is Pyoverdine export outer membrane protein OpmQ from Pseudomonas putida (strain ATCC 47054 / DSM 6125 / CFBP 8728 / NCIMB 11950 / KT2440).